Here is a 710-residue protein sequence, read N- to C-terminus: ARM REPEAT PROTEIN INTERACTING WITH ABF2 (710 aa).

The tract at residues 1–35 (MDQQPERREGRSFPERKGQKRKLEEGAAAVEDREI) is disordered. ARM repeat units lie at residues 85 to 127 (EDLV…EKGS), 138 to 185 (PEYQ…NLAH), 188 to 227 (SSIK…TLAF), 230 to 269 (DDNK…NLVH), 272 to 311 (PHIK…QFAS), 314 to 353 (SDCK…RLAQ), 355 to 394 (AHNQ…GLAD), 429 to 468 (LKRL…HLCS), and 470 to 509 (EDQR…KLAN). Residues 541–608 (SDVTFLVEGR…IYTGSVDITN (68 aa)) enclose the BTB domain.

Interacts with ABF2. Interacts with DUF7/AIP1. Detected in embryos and most of the vegetative and reproductive organs.

It is found in the nucleus. It functions in the pathway protein modification; protein ubiquitination. May act as a substrate-specific adapter of an E3 ubiquitin-protein ligase complex (CUL3-RBX1-BTB) which mediates the ubiquitination and subsequent proteasomal degradation of target proteins. Acts as a positive regulator of ABA response via the modulation of the transcriptional activity of ABF2, a transcription factor which controls ABA-dependent gene expression via the G-box-type ABA-responsive elements. Negative regulator of seed germination and young seedling growth. The polypeptide is ARM REPEAT PROTEIN INTERACTING WITH ABF2 (ARIA) (Arabidopsis thaliana (Mouse-ear cress)).